Here is a 335-residue protein sequence, read N- to C-terminus: Anthranilate phosphoribosyltransferase (335 aa).

Residues Gly-79, 82–83, Thr-87, 89–92, 107–115, and Ser-119 each bind 5-phospho-alpha-D-ribose 1-diphosphate; these read GD, NIST, and KHGSRSVSS. Residue Gly-79 coordinates anthranilate. Ser-91 serves as a coordination point for Mg(2+). Position 165 (Arg-165) interacts with anthranilate. Asp-223 and Glu-224 together coordinate Mg(2+).

Belongs to the anthranilate phosphoribosyltransferase family. As to quaternary structure, homodimer. Mg(2+) is required as a cofactor.

It carries out the reaction N-(5-phospho-beta-D-ribosyl)anthranilate + diphosphate = 5-phospho-alpha-D-ribose 1-diphosphate + anthranilate. Its pathway is amino-acid biosynthesis; L-tryptophan biosynthesis; L-tryptophan from chorismate: step 2/5. Its function is as follows. Catalyzes the transfer of the phosphoribosyl group of 5-phosphorylribose-1-pyrophosphate (PRPP) to anthranilate to yield N-(5'-phosphoribosyl)-anthranilate (PRA). The sequence is that of Anthranilate phosphoribosyltransferase from Helicobacter pylori (strain G27).